The primary structure comprises 115 residues: UPF0102 protein NGO_1987 (115 aa).

The protein belongs to the UPF0102 family.

In Neisseria gonorrhoeae (strain ATCC 700825 / FA 1090), this protein is UPF0102 protein NGO_1987.